The sequence spans 391 residues: Ferrochelatase (391 aa).

Fe cation contacts are provided by H196 and E281.

This sequence belongs to the ferrochelatase family.

It localises to the cytoplasm. It catalyses the reaction heme b + 2 H(+) = protoporphyrin IX + Fe(2+). Its pathway is porphyrin-containing compound metabolism; protoheme biosynthesis; protoheme from protoporphyrin-IX: step 1/1. Catalyzes the ferrous insertion into protoporphyrin IX. The polypeptide is Ferrochelatase (Prochlorococcus marinus (strain NATL1A)).